We begin with the raw amino-acid sequence, 158 residues long: D-aminoacyl-tRNA deacylase (158 aa).

Residues 144–145 (GP) carry the Gly-cisPro motif, important for rejection of L-amino acids motif.

It belongs to the DTD family. Homodimer.

It is found in the cytoplasm. It catalyses the reaction glycyl-tRNA(Ala) + H2O = tRNA(Ala) + glycine + H(+). It carries out the reaction a D-aminoacyl-tRNA + H2O = a tRNA + a D-alpha-amino acid + H(+). In terms of biological role, an aminoacyl-tRNA editing enzyme that deacylates mischarged D-aminoacyl-tRNAs. Also deacylates mischarged glycyl-tRNA(Ala), protecting cells against glycine mischarging by AlaRS. Acts via tRNA-based rather than protein-based catalysis; rejects L-amino acids rather than detecting D-amino acids in the active site. By recycling D-aminoacyl-tRNA to D-amino acids and free tRNA molecules, this enzyme counteracts the toxicity associated with the formation of D-aminoacyl-tRNA entities in vivo and helps enforce protein L-homochirality. In Corynebacterium kroppenstedtii (strain DSM 44385 / JCM 11950 / CIP 105744 / CCUG 35717), this protein is D-aminoacyl-tRNA deacylase.